Reading from the N-terminus, the 212-residue chain is 2-C-methyl-D-erythritol 4-phosphate cytidylyltransferase (212 aa).

The protein belongs to the IspD/TarI cytidylyltransferase family. IspD subfamily.

It carries out the reaction 2-C-methyl-D-erythritol 4-phosphate + CTP + H(+) = 4-CDP-2-C-methyl-D-erythritol + diphosphate. Its pathway is isoprenoid biosynthesis; isopentenyl diphosphate biosynthesis via DXP pathway; isopentenyl diphosphate from 1-deoxy-D-xylulose 5-phosphate: step 2/6. Functionally, catalyzes the formation of 4-diphosphocytidyl-2-C-methyl-D-erythritol from CTP and 2-C-methyl-D-erythritol 4-phosphate (MEP). In Chlamydia caviae (strain ATCC VR-813 / DSM 19441 / 03DC25 / GPIC) (Chlamydophila caviae), this protein is 2-C-methyl-D-erythritol 4-phosphate cytidylyltransferase.